The sequence spans 40 residues: Submaxillary gland androgen-regulated protein 2, isoform epsilon (40 aa).

Residues 1–20 form the signal peptide; sequence MKALYMVFVLWVLIGCFLRC.

The protein localises to the secreted. May play a role in protection or detoxification. In Mus musculus (Mouse), this protein is Submaxillary gland androgen-regulated protein 2, isoform epsilon (Smr2).